A 341-amino-acid chain; its full sequence is Putative MAGE domain-containing protein MAGEA13P (341 aa).

2 disordered regions span residues 1 to 21 (MPHS…APKE) and 78 to 101 (KATP…GASQ). Residues 87-97 (ESSRSQEKKDP) are compositionally biased toward basic and acidic residues. The MAGE domain occupies 105-304 (LEKKVDELVK…SSFPLLYEEA (200 aa)).

The protein is Putative MAGE domain-containing protein MAGEA13P (MAGEA13P) of Homo sapiens (Human).